We begin with the raw amino-acid sequence, 98 residues long: Large ribosomal subunit protein uL23 (98 aa).

This sequence belongs to the universal ribosomal protein uL23 family. In terms of assembly, part of the 50S ribosomal subunit. Contacts protein L29, and trigger factor when it is bound to the ribosome.

Functionally, one of the early assembly proteins it binds 23S rRNA. One of the proteins that surrounds the polypeptide exit tunnel on the outside of the ribosome. Forms the main docking site for trigger factor binding to the ribosome. This is Large ribosomal subunit protein uL23 from Maricaulis maris (strain MCS10) (Caulobacter maris).